Here is a 137-residue protein sequence, read N- to C-terminus: Nucleoside diphosphate kinase (137 aa).

ATP is bound by residues K9, F57, R85, T91, R102, and N112. H115 (pros-phosphohistidine intermediate) is an active-site residue.

It belongs to the NDK family. In terms of assembly, homotetramer. Mg(2+) is required as a cofactor.

The protein localises to the cytoplasm. It carries out the reaction a 2'-deoxyribonucleoside 5'-diphosphate + ATP = a 2'-deoxyribonucleoside 5'-triphosphate + ADP. The enzyme catalyses a ribonucleoside 5'-diphosphate + ATP = a ribonucleoside 5'-triphosphate + ADP. Major role in the synthesis of nucleoside triphosphates other than ATP. The ATP gamma phosphate is transferred to the NDP beta phosphate via a ping-pong mechanism, using a phosphorylated active-site intermediate. In Campylobacter concisus (strain 13826), this protein is Nucleoside diphosphate kinase.